The chain runs to 197 residues: GTP cyclohydrolase-2 (197 aa).

GTP is bound at residue 50-54; that stretch reads RIHSE. 3 residues coordinate Zn(2+): Cys-55, Cys-66, and Cys-68. Residues Gln-71, 93–95, and Thr-115 contribute to the GTP site; that span reads EGR. Asp-127 serves as the catalytic Proton acceptor. The Nucleophile role is filled by Arg-129. Residues Thr-150 and Lys-155 each contribute to the GTP site.

This sequence belongs to the GTP cyclohydrolase II family. It depends on Zn(2+) as a cofactor.

It catalyses the reaction GTP + 4 H2O = 2,5-diamino-6-hydroxy-4-(5-phosphoribosylamino)-pyrimidine + formate + 2 phosphate + 3 H(+). It functions in the pathway cofactor biosynthesis; riboflavin biosynthesis; 5-amino-6-(D-ribitylamino)uracil from GTP: step 1/4. In terms of biological role, catalyzes the conversion of GTP to 2,5-diamino-6-ribosylamino-4(3H)-pyrimidinone 5'-phosphate (DARP), formate and pyrophosphate. The chain is GTP cyclohydrolase-2 from Tolumonas auensis (strain DSM 9187 / NBRC 110442 / TA 4).